A 156-amino-acid chain; its full sequence is Small ribosomal subunit protein uS7 (156 aa).

This sequence belongs to the universal ribosomal protein uS7 family. In terms of assembly, part of the 30S ribosomal subunit. Contacts proteins S9 and S11.

Its function is as follows. One of the primary rRNA binding proteins, it binds directly to 16S rRNA where it nucleates assembly of the head domain of the 30S subunit. Is located at the subunit interface close to the decoding center, probably blocks exit of the E-site tRNA. The sequence is that of Small ribosomal subunit protein uS7 from Latilactobacillus sakei subsp. sakei (strain 23K) (Lactobacillus sakei subsp. sakei).